The sequence spans 659 residues: Fructose-1,6-bisphosphatase class 3 (659 aa).

This sequence belongs to the FBPase class 3 family. Requires Mn(2+) as cofactor.

The catalysed reaction is beta-D-fructose 1,6-bisphosphate + H2O = beta-D-fructose 6-phosphate + phosphate. It functions in the pathway carbohydrate biosynthesis; gluconeogenesis. The protein is Fructose-1,6-bisphosphatase class 3 of Clostridium botulinum (strain Alaska E43 / Type E3).